An 85-amino-acid polypeptide reads, in one-letter code: Beta-mammal/insect toxin Lqhb1 (85 aa).

Positions 1-19 are cleaved as a signal peptide; it reads MKIIIFLIVSSLMLIGVKT. Residues 20–82 enclose the LCN-type CS-alpha/beta domain; that stretch reads DNGYLLNKAT…LWAYATNKCN (63 aa). Disulfide bonds link Cys31–Cys81, Cys35–Cys56, Cys42–Cys63, and Cys46–Cys65.

Belongs to the long (4 C-C) scorpion toxin superfamily. Sodium channel inhibitor family. Expressed by the venom gland.

The protein localises to the secreted. Its function is as follows. Beta toxins bind voltage-independently at site-4 of sodium channels (Nav) and shift the voltage of activation toward more negative potentials thereby affecting sodium channel activation and promoting spontaneous and repetitive firing. Competes, with apparent high affinity, with anti-insect and anti-mammalian beta-toxins for binding to cockroach and rat brain synaptosomes, respectively. Also competes with an anti-mammalian alpha-toxin on binding to rat brain sodium channels. Has a weak effect on cardiac sodium channels and a marked effect on rat brain and skeletal muscle sodium channels. In Leiurus hebraeus (Hebrew deathstalker scorpion), this protein is Beta-mammal/insect toxin Lqhb1.